Here is a 332-residue protein sequence, read N- to C-terminus: tRNA uridine(34) hydroxylase (332 aa).

In terms of domain architecture, Rhodanese spans 123–217; it reads SDPEVLLVDT…YLEEVKQEES (95 aa). Cysteine 177 functions as the Cysteine persulfide intermediate in the catalytic mechanism. The interval 302–332 is disordered; sequence SDVGAVIQSRRDNKENLKKSQVKLNNKKYNK. Basic and acidic residues predominate over residues 310-319; it reads SRRDNKENLK.

This sequence belongs to the TrhO family.

The catalysed reaction is uridine(34) in tRNA + AH2 + O2 = 5-hydroxyuridine(34) in tRNA + A + H2O. In terms of biological role, catalyzes oxygen-dependent 5-hydroxyuridine (ho5U) modification at position 34 in tRNAs. The chain is tRNA uridine(34) hydroxylase from Shewanella woodyi (strain ATCC 51908 / MS32).